We begin with the raw amino-acid sequence, 61 residues long: Photosystem II reaction center protein K (61 aa).

The propeptide occupies 1 to 24; that stretch reads MLNIFSLICICLNSALHSSSFFFA. The chain crosses the membrane as a helical span at residues 32 to 52; sequence FFNPIVDFMPVIPVLFFLLAL.

Belongs to the PsbK family. PSII is composed of 1 copy each of membrane proteins PsbA, PsbB, PsbC, PsbD, PsbE, PsbF, PsbH, PsbI, PsbJ, PsbK, PsbL, PsbM, PsbT, PsbX, PsbY, PsbZ, Psb30/Ycf12, at least 3 peripheral proteins of the oxygen-evolving complex and a large number of cofactors. It forms dimeric complexes.

The protein localises to the plastid. It localises to the chloroplast thylakoid membrane. One of the components of the core complex of photosystem II (PSII). PSII is a light-driven water:plastoquinone oxidoreductase that uses light energy to abstract electrons from H(2)O, generating O(2) and a proton gradient subsequently used for ATP formation. It consists of a core antenna complex that captures photons, and an electron transfer chain that converts photonic excitation into a charge separation. This Drimys granadensis protein is Photosystem II reaction center protein K.